Consider the following 209-residue polypeptide: Ion-translocating oxidoreductase complex subunit G (209 aa).

The Cytoplasmic portion of the chain corresponds to 1-8; it reads MLTAIRKN. The chain crosses the membrane as a helical span at residues 9-29; sequence GLILAVFACVSTGLVALTYAL. Over 30-209 the chain is Periplasmic; it reads TAEQIQQQEQ…HNQPNPCEGQ (180 aa). The residue at position 175 (Thr-175) is an FMN phosphoryl threonine.

It belongs to the RnfG family. The complex is composed of six subunits: RnfA, RnfB, RnfC, RnfD, RnfE and RnfG. FMN is required as a cofactor.

The protein resides in the cell inner membrane. In terms of biological role, part of a membrane-bound complex that couples electron transfer with translocation of ions across the membrane. The chain is Ion-translocating oxidoreductase complex subunit G from Vibrio cholerae serotype O1 (strain ATCC 39541 / Classical Ogawa 395 / O395).